Consider the following 784-residue polypeptide: E3 UFM1-protein ligase 1 homolog (784 aa).

The tract at residues 405–480 (SVSTQELEDD…RGGGAGNKKA (76 aa)) is disordered. A compositionally biased stretch (basic residues) spans 444 to 454 (KSTKKHQRGKA).

The protein belongs to the UFL1 family.

E3 UFM1-protein ligase that mediates ufmylation of target proteins. The chain is E3 UFM1-protein ligase 1 homolog from Drosophila yakuba (Fruit fly).